The primary structure comprises 336 residues: Calcium uniporter protein 3, mitochondrial (336 aa).

The transit peptide at 1–69 (MAMRKLLSKK…RFMHNSAMIR (69 aa)) directs the protein to the mitochondrion. The next 2 membrane-spanning stretches (helical) occupy residues 231 to 251 (LWAG…LTFW) and 257 to 277 (VMEP…YAFF). The Selectivity filter signature appears at 255–263 (WDVMEPICF). Glu259 contributes to the Ca(2+) binding site.

It belongs to the MCU (TC 1.A.77) family.

It is found in the mitochondrion inner membrane. The enzyme catalyses Ca(2+)(in) = Ca(2+)(out). In terms of biological role, mitochondrial inner membrane calcium uniporter that mediates calcium uptake into mitochondria. Constitutes a pore-forming and calcium-conducting subunit. Mitochondrial calcium homeostasis plays key roles in cellular physiology and regulates cell bioenergetics, cytoplasmic calcium signals and activation of cell death pathways. This Arabidopsis thaliana (Mouse-ear cress) protein is Calcium uniporter protein 3, mitochondrial.